We begin with the raw amino-acid sequence, 184 residues long: Glucosamine 6-phosphate N-acetyltransferase (184 aa).

The 146-residue stretch at 39–184 (LVLRPLCTAD…ENYMCRRFLK (146 aa)) folds into the N-acetyltransferase domain. Residues Thr61, 108 to 111 (KFIH), and 120 to 122 (EDV) each bind substrate. Position 130 to 135 (130 to 135 (GKQLGK)) interacts with acetyl-CoA. Position 151 to 152 (151 to 152 (YK)) interacts with substrate. 165-167 (YKK) lines the acetyl-CoA pocket. Substrate-binding residues include Glu175 and Arg181.

The protein belongs to the acetyltransferase family. GNA1 subfamily. As to quaternary structure, homodimer. In terms of tissue distribution, ubiquitous. Shows a strong differential expression pattern in adult hematopoietic precursor cells.

It localises to the golgi apparatus membrane. It is found in the endosome membrane. The enzyme catalyses D-glucosamine 6-phosphate + acetyl-CoA = N-acetyl-D-glucosamine 6-phosphate + CoA + H(+). The protein operates within nucleotide-sugar biosynthesis; UDP-N-acetyl-alpha-D-glucosamine biosynthesis; N-acetyl-alpha-D-glucosamine 1-phosphate from alpha-D-glucosamine 6-phosphate (route I): step 1/2. The polypeptide is Glucosamine 6-phosphate N-acetyltransferase (Gnpnat1) (Mus musculus (Mouse)).